The chain runs to 507 residues: Putative thymidine phosphorylase (507 aa).

This sequence belongs to the thymidine/pyrimidine-nucleoside phosphorylase family. Type 2 subfamily.

It catalyses the reaction thymidine + phosphate = 2-deoxy-alpha-D-ribose 1-phosphate + thymine. The sequence is that of Putative thymidine phosphorylase from Ralstonia nicotianae (strain ATCC BAA-1114 / GMI1000) (Ralstonia solanacearum).